The sequence spans 203 residues: uncharacterized protein (203 aa).

The first 20 residues, 1–20 (MDELILPILILLFLVFVAYF), serve as a signal peptide directing secretion.

This is an uncharacterized protein from Pasteurella multocida (strain Pm70).